Here is a 143-residue protein sequence, read N- to C-terminus: Large ribosomal subunit protein uL11 (143 aa).

Belongs to the universal ribosomal protein uL11 family. In terms of assembly, part of the ribosomal stalk of the 50S ribosomal subunit. Interacts with L10 and the large rRNA to form the base of the stalk. L10 forms an elongated spine to which L12 dimers bind in a sequential fashion forming a multimeric L10(L12)X complex. In terms of processing, one or more lysine residues are methylated.

Its function is as follows. Forms part of the ribosomal stalk which helps the ribosome interact with GTP-bound translation factors. This is Large ribosomal subunit protein uL11 from Erythrobacter litoralis (strain HTCC2594).